We begin with the raw amino-acid sequence, 520 residues long: J protein JJJ2 (520 aa).

The region spanning 7-71 is the J domain; that stretch reads TYYSVLGLPT…SSKQEYDAIL (65 aa). 2 disordered regions span residues 82-257 and 389-409; these read LGYK…DLQN and FESS…RGRP. Residues 91-100 are compositionally biased toward low complexity; sequence QNQSNNLNQQ. Positions 152-182 are enriched in polar residues; it reads TSKNSKEQQGSQETTNTSENLQRNAKGNKNN. Residues 397–409 are compositionally biased toward basic and acidic residues; that stretch reads ENHRSDFNLRGRP.

It is found in the cytoplasm. The protein localises to the nucleus. In Vanderwaltozyma polyspora (strain ATCC 22028 / DSM 70294 / BCRC 21397 / CBS 2163 / NBRC 10782 / NRRL Y-8283 / UCD 57-17) (Kluyveromyces polysporus), this protein is J protein JJJ2 (JJJ2).